The chain runs to 351 residues: N-acetyl-gamma-glutamyl-phosphate reductase (351 aa).

The active site involves cysteine 154.

Belongs to the NAGSA dehydrogenase family. Type 1 subfamily.

The protein localises to the cytoplasm. The enzyme catalyses N-acetyl-L-glutamate 5-semialdehyde + phosphate + NADP(+) = N-acetyl-L-glutamyl 5-phosphate + NADPH + H(+). It participates in amino-acid biosynthesis; L-arginine biosynthesis; N(2)-acetyl-L-ornithine from L-glutamate: step 3/4. Catalyzes the NADPH-dependent reduction of N-acetyl-5-glutamyl phosphate to yield N-acetyl-L-glutamate 5-semialdehyde. In Synechocystis sp. (strain ATCC 27184 / PCC 6803 / Kazusa), this protein is N-acetyl-gamma-glutamyl-phosphate reductase.